Here is a 71-residue protein sequence, read N- to C-terminus: DNA-directed RNA polymerase subunit epsilon (71 aa).

Belongs to the RNA polymerase subunit epsilon family. RNAP is composed of a core of 2 alpha, a beta and a beta' subunit. The core is associated with a delta subunit, and at least one of epsilon or omega. When a sigma factor is associated with the core the holoenzyme is formed, which can initiate transcription.

The catalysed reaction is RNA(n) + a ribonucleoside 5'-triphosphate = RNA(n+1) + diphosphate. In terms of biological role, a non-essential component of RNA polymerase (RNAP). In Staphylococcus carnosus (strain TM300), this protein is DNA-directed RNA polymerase subunit epsilon.